A 461-amino-acid chain; its full sequence is Bifunctional protein GlmU (461 aa).

Residues 1-232 form a pyrophosphorylase region; that stretch reads MNLQIIILAA…SFEVQGINNR (232 aa). UDP-N-acetyl-alpha-D-glucosamine is bound by residues 8 to 11, K22, Q73, and 78 to 79; these read LAAG and GT. D102 lines the Mg(2+) pocket. UDP-N-acetyl-alpha-D-glucosamine-binding residues include G142, E157, and N230. Residue N230 participates in Mg(2+) binding. Residues 233-253 form a linker region; it reads QQLQQLERIWQQRAANQLMEK. The segment at 254-461 is N-acetyltransferase; sequence GVTLADANRF…WKRPAKRERD (208 aa). Residues R336 and K354 each contribute to the UDP-N-acetyl-alpha-D-glucosamine site. The active-site Proton acceptor is the H366. Y369 and N380 together coordinate UDP-N-acetyl-alpha-D-glucosamine. Acetyl-CoA contacts are provided by residues A383, 389 to 390, S408, and A426; that span reads NY.

The protein in the N-terminal section; belongs to the N-acetylglucosamine-1-phosphate uridyltransferase family. This sequence in the C-terminal section; belongs to the transferase hexapeptide repeat family. As to quaternary structure, homotrimer. Mg(2+) is required as a cofactor.

The protein resides in the cytoplasm. It catalyses the reaction alpha-D-glucosamine 1-phosphate + acetyl-CoA = N-acetyl-alpha-D-glucosamine 1-phosphate + CoA + H(+). The catalysed reaction is N-acetyl-alpha-D-glucosamine 1-phosphate + UTP + H(+) = UDP-N-acetyl-alpha-D-glucosamine + diphosphate. Its pathway is nucleotide-sugar biosynthesis; UDP-N-acetyl-alpha-D-glucosamine biosynthesis; N-acetyl-alpha-D-glucosamine 1-phosphate from alpha-D-glucosamine 6-phosphate (route II): step 2/2. It functions in the pathway nucleotide-sugar biosynthesis; UDP-N-acetyl-alpha-D-glucosamine biosynthesis; UDP-N-acetyl-alpha-D-glucosamine from N-acetyl-alpha-D-glucosamine 1-phosphate: step 1/1. It participates in bacterial outer membrane biogenesis; LPS lipid A biosynthesis. Functionally, catalyzes the last two sequential reactions in the de novo biosynthetic pathway for UDP-N-acetylglucosamine (UDP-GlcNAc). The C-terminal domain catalyzes the transfer of acetyl group from acetyl coenzyme A to glucosamine-1-phosphate (GlcN-1-P) to produce N-acetylglucosamine-1-phosphate (GlcNAc-1-P), which is converted into UDP-GlcNAc by the transfer of uridine 5-monophosphate (from uridine 5-triphosphate), a reaction catalyzed by the N-terminal domain. The protein is Bifunctional protein GlmU of Legionella pneumophila (strain Lens).